The primary structure comprises 332 residues: Anthranilate phosphoribosyltransferase (332 aa).

5-phospho-alpha-D-ribose 1-diphosphate-binding positions include Gly-80, 83–84 (GD), Thr-88, 90–93 (NLST), 108–116 (KHGNRSASG), and Ser-120. Gly-80 is an anthranilate binding site. A Mg(2+)-binding site is contributed by Ser-92. Asn-111 provides a ligand contact to anthranilate. Arg-166 contributes to the anthranilate binding site. Mg(2+) is bound by residues Asp-224 and Glu-225.

Belongs to the anthranilate phosphoribosyltransferase family. Homodimer. Requires Mg(2+) as cofactor.

The catalysed reaction is N-(5-phospho-beta-D-ribosyl)anthranilate + diphosphate = 5-phospho-alpha-D-ribose 1-diphosphate + anthranilate. Its pathway is amino-acid biosynthesis; L-tryptophan biosynthesis; L-tryptophan from chorismate: step 2/5. In terms of biological role, catalyzes the transfer of the phosphoribosyl group of 5-phosphorylribose-1-pyrophosphate (PRPP) to anthranilate to yield N-(5'-phosphoribosyl)-anthranilate (PRA). The sequence is that of Anthranilate phosphoribosyltransferase from Pyrobaculum calidifontis (strain DSM 21063 / JCM 11548 / VA1).